A 115-amino-acid chain; its full sequence is T cell receptor beta variable 11-3 (115 aa).

A signal peptide spans 1-21 (MGTRLLCWVAFCLLVEELIEA). In terms of domain architecture, Ig-like spans 22 to 115 (GVVQSPRYKI…SAVYLCASSL (94 aa)). An intrachain disulfide couples Cys-42 to Cys-111.

As to quaternary structure, alpha-beta TR is a heterodimer composed of an alpha and beta chain; disulfide-linked. The alpha-beta TR is associated with the transmembrane signaling CD3 coreceptor proteins to form the TR-CD3 (TcR or TCR). The assembly of alpha-beta TR heterodimers with CD3 occurs in the endoplasmic reticulum where a single alpha-beta TR heterodimer associates with one CD3D-CD3E heterodimer, one CD3G-CD3E heterodimer and one CD247 homodimer forming a stable octameric structure. CD3D-CD3E and CD3G-CD3E heterodimers preferentially associate with TR alpha and TR beta chains, respectively. The association of the CD247 homodimer is the last step of TcR assembly in the endoplasmic reticulum and is required for transport to the cell surface.

It localises to the cell membrane. In terms of biological role, v region of the variable domain of T cell receptor (TR) beta chain that participates in the antigen recognition. Alpha-beta T cell receptors are antigen specific receptors which are essential to the immune response and are present on the cell surface of T lymphocytes. Recognize peptide-major histocompatibility (MH) (pMH) complexes that are displayed by antigen presenting cells (APC), a prerequisite for efficient T cell adaptive immunity against pathogens. Binding of alpha-beta TR to pMH complex initiates TR-CD3 clustering on the cell surface and intracellular activation of LCK that phosphorylates the ITAM motifs of CD3G, CD3D, CD3E and CD247 enabling the recruitment of ZAP70. In turn ZAP70 phosphorylates LAT, which recruits numerous signaling molecules to form the LAT signalosome. The LAT signalosome propagates signal branching to three major signaling pathways, the calcium, the mitogen-activated protein kinase (MAPK) kinase and the nuclear factor NF-kappa-B (NF-kB) pathways, leading to the mobilization of transcription factors that are critical for gene expression and essential for T cell growth and differentiation. The T cell repertoire is generated in the thymus, by V-(D)-J rearrangement. This repertoire is then shaped by intrathymic selection events to generate a peripheral T cell pool of self-MH restricted, non-autoaggressive T cells. Post-thymic interaction of alpha-beta TR with the pMH complexes shapes TR structural and functional avidity. In Homo sapiens (Human), this protein is T cell receptor beta variable 11-3.